The chain runs to 211 residues: Urease accessory protein UreF (211 aa).

Belongs to the UreF family. As to quaternary structure, ureD, UreF and UreG form a complex that acts as a GTP-hydrolysis-dependent molecular chaperone, activating the urease apoprotein by helping to assemble the nickel containing metallocenter of UreC. The UreE protein probably delivers the nickel.

It is found in the cytoplasm. Its function is as follows. Required for maturation of urease via the functional incorporation of the urease nickel metallocenter. The sequence is that of Urease accessory protein UreF from Mycobacterium sp. (strain JLS).